The chain runs to 422 residues: Ferrochelatase, mitochondrial (422 aa).

A mitochondrion-targeting transit peptide spans 1–53 (MLSASANMAAALRAAGALLREPLVHGSSRACQPWRCQSGAAVAATTEKVHHAK). Position 56 is an N6-acetyllysine (K56). Residues R114, Y122, and S129 each coordinate protoporphyrin IX. An N6-succinyllysine modification is found at K137. C195 provides a ligand contact to [2Fe-2S] cluster. Residue H229 is part of the active site. K289 is subject to N6-acetyllysine; alternate. K289 carries the post-translational modification N6-succinyllysine; alternate. Residue D382 is part of the active site. Positions 402, 405, and 410 each coordinate [2Fe-2S] cluster. K414 is subject to N6-acetyllysine; alternate. An N6-succinyllysine; alternate modification is found at K414.

It belongs to the ferrochelatase family. Homodimer. Homotetramer. Interaction with PGRMC1; the interaction results in decreased FECH activity. Interacts with ABCB10 and SLC25A37; this interaction forms an oligomeric complex. Forms a complex with ABCB7 and ABCB10, where a dimeric FECH bridges ABCB7 and ABCB10 homodimers; this complex may be required for cellular iron homeostasis, mitochondrial function and heme biosynthesis. Interacts with ABCB7 and ABCB10. [2Fe-2S] cluster is required as a cofactor. As to expression, erythroid and hepatic cells.

The protein localises to the mitochondrion inner membrane. It carries out the reaction heme b + 2 H(+) = protoporphyrin IX + Fe(2+). The protein operates within porphyrin-containing compound metabolism; protoheme biosynthesis; protoheme from protoporphyrin-IX: step 1/1. Its function is as follows. Catalyzes the ferrous insertion into protoporphyrin IX. In Mus musculus (Mouse), this protein is Ferrochelatase, mitochondrial.